Here is an 827-residue protein sequence, read N- to C-terminus: Sporozoite surface protein 2 (827 aa).

Positions 1–22 are cleaved as a signal peptide; the sequence is MKLLGNSKYIFVVLLLCISVFL. The 186-residue stretch at 43–228 folds into the VWFA domain; sequence DIHILLDGSG…NMIKPFLTKV (186 aa). Residues 235 to 281 enclose the TSP type-1 domain; the sequence is IAHCGKWEEWSECSTTCDEGRKIRRRQILHPGCVSEMTTPCKVRDCP. 3 disulfide bridges follow: Cys-238–Cys-267, Cys-247–Cys-275, and Cys-251–Cys-280. Residues 278 to 761 are disordered; sequence RDCPQIPIPP…NKNQSKSNNG (484 aa). Residues 301–388 show a composition bias toward low complexity; it reads EEPVNPNDPN…NNPNDPSNPN (88 aa). The interval 306–392 is 29 X 3 AA tandem repeats; sequence PNDPNDPNNP…DPSNPNNPNP (87 aa). Residues 392–407 show a composition bias toward basic residues; sequence PKKRNPKRRNPNKPKP. The segment at 402 to 514 is 20 tandem tetra-/hexapeptide repeats; sequence PNKPKPNKPN…EPSNPNEPSN (113 aa). The span at 408-464 shows a compositional bias: pro residues; the sequence is NKPNPNKPNPNEPSNPNKPNPNEPSNPNKPNPNEPSNPNKPNPNEPSNPNKPNPNEP. Positions 465-567 are enriched in low complexity; it reads LNPNEPSNPN…KEPSNPNEPS (103 aa). 2 repeat units span residues 603-613 and 614-624. The segment at 603 to 624 is 2 X 11 AA tandem repeats; sequence PEESNPKEPINPEESNPKEPIN. The span at 657–671 shows a compositional bias: polar residues; sequence KGNNIPSNLPENPSD. Residues 709–724 are compositionally biased toward basic and acidic residues; it reads YKGHEERIPKPHRSND. Residues 764–787 form a helical membrane-spanning segment; sequence IAGGIIGGLAILGCAGVGYNFIAG.

Its subcellular location is the cell membrane. The chain is Sporozoite surface protein 2 (SSP2) from Plasmodium yoelii yoelii.